The primary structure comprises 711 residues: Ribosomal RNA large subunit methyltransferase K/L (711 aa).

The THUMP domain maps to 43 to 154 (LGYRITLWSR…RGEITIGINF (112 aa)).

It belongs to the methyltransferase superfamily. RlmKL family.

Its subcellular location is the cytoplasm. It catalyses the reaction guanosine(2445) in 23S rRNA + S-adenosyl-L-methionine = N(2)-methylguanosine(2445) in 23S rRNA + S-adenosyl-L-homocysteine + H(+). The enzyme catalyses guanosine(2069) in 23S rRNA + S-adenosyl-L-methionine = N(2)-methylguanosine(2069) in 23S rRNA + S-adenosyl-L-homocysteine + H(+). Its function is as follows. Specifically methylates the guanine in position 2445 (m2G2445) and the guanine in position 2069 (m7G2069) of 23S rRNA. This chain is Ribosomal RNA large subunit methyltransferase K/L, found in Shewanella pealeana (strain ATCC 700345 / ANG-SQ1).